Here is a 291-residue protein sequence, read N- to C-terminus: Nucleotide-binding protein EUBREC_0697 (291 aa).

8–15 (GMSGAGKS) serves as a coordination point for ATP. A GTP-binding site is contributed by 59-62 (DVRN).

This sequence belongs to the RapZ-like family.

Functionally, displays ATPase and GTPase activities. The chain is Nucleotide-binding protein EUBREC_0697 from Agathobacter rectalis (strain ATCC 33656 / DSM 3377 / JCM 17463 / KCTC 5835 / VPI 0990) (Eubacterium rectale).